Reading from the N-terminus, the 645-residue chain is 1,4-alpha-glucan branching enzyme GlgB (645 aa).

Asp309 functions as the Nucleophile in the catalytic mechanism. Glu352 acts as the Proton donor in catalysis. The segment at 619–645 (VKTRKGSKKQDGSKTKVRSNVTSRGKR) is disordered. Residues 636–645 (RSNVTSRGKR) show a composition bias toward polar residues.

This sequence belongs to the glycosyl hydrolase 13 family. GlgB subfamily. In terms of assembly, monomer.

The enzyme catalyses Transfers a segment of a (1-&gt;4)-alpha-D-glucan chain to a primary hydroxy group in a similar glucan chain.. Its pathway is glycan biosynthesis; glycogen biosynthesis. In terms of biological role, catalyzes the formation of the alpha-1,6-glucosidic linkages in glycogen by scission of a 1,4-alpha-linked oligosaccharide from growing alpha-1,4-glucan chains and the subsequent attachment of the oligosaccharide to the alpha-1,6 position. This chain is 1,4-alpha-glucan branching enzyme GlgB, found in Bacillus cereus (strain ATCC 14579 / DSM 31 / CCUG 7414 / JCM 2152 / NBRC 15305 / NCIMB 9373 / NCTC 2599 / NRRL B-3711).